The chain runs to 358 residues: 4-hydroxy-3-methylbut-2-en-1-yl diphosphate synthase (flavodoxin) (358 aa).

[4Fe-4S] cluster-binding residues include Cys264, Cys267, Cys299, and Glu306.

The protein belongs to the IspG family. It depends on [4Fe-4S] cluster as a cofactor.

It catalyses the reaction (2E)-4-hydroxy-3-methylbut-2-enyl diphosphate + oxidized [flavodoxin] + H2O + 2 H(+) = 2-C-methyl-D-erythritol 2,4-cyclic diphosphate + reduced [flavodoxin]. Its pathway is isoprenoid biosynthesis; isopentenyl diphosphate biosynthesis via DXP pathway; isopentenyl diphosphate from 1-deoxy-D-xylulose 5-phosphate: step 5/6. Converts 2C-methyl-D-erythritol 2,4-cyclodiphosphate (ME-2,4cPP) into 1-hydroxy-2-methyl-2-(E)-butenyl 4-diphosphate. This Helicobacter acinonychis (strain Sheeba) protein is 4-hydroxy-3-methylbut-2-en-1-yl diphosphate synthase (flavodoxin).